Here is a 415-residue protein sequence, read N- to C-terminus: GPI mannosyltransferase 1 (415 aa).

Helical transmembrane passes span 8–28 (PSLV…YGAW), 82–102 (FFSF…WLIA), 134–154 (TRGS…WAVL), 158–178 (ITLA…PFVY), 222–242 (LLLT…MYIL), 284–304 (FESL…PIVL), 329–349 (SQYF…SSLM), 354–374 (LGIT…QQGY), and 387–407 (GLFL…GIII).

This sequence belongs to the PIGM family.

Its subcellular location is the endoplasmic reticulum membrane. It functions in the pathway glycolipid biosynthesis; glycosylphosphatidylinositol-anchor biosynthesis. In terms of biological role, mannosyltransferase involved in glycosylphosphatidylinositol-anchor biosynthesis. Transfers the first alpha-1,4-mannose to GlcN-acyl-PI during GPI precursor assembly. Required for cell wall integrity. The protein is GPI mannosyltransferase 1 (gpi14) of Aspergillus oryzae (strain ATCC 42149 / RIB 40) (Yellow koji mold).